Consider the following 31-residue polypeptide: Cyclotide mden-M (31 aa).

The segment at residues 1-31 (GTIPCGESCVYIPCITSALGCSCKKKVCYKN) is a cross-link (cyclopeptide (Gly-Asn)). Cystine bridges form between Cys5/Cys21, Cys9/Cys23, and Cys14/Cys28.

Belongs to the cyclotide family. Bracelet subfamily. In terms of processing, this is a cyclic peptide.

Probably participates in a plant defense mechanism. The protein is Cyclotide mden-M of Melicytus dentatus (Tree violet).